The following is a 265-amino-acid chain: MIESQRHSYHLVDPSPWPISGSLGALATTVGGVMYMHSFQGGARLLSLGLIFILYTMFVWWRDVLRESTLEGHHTKVVQLGLRYGFILFIVSEVMFFFAFFWAFFHSSLAPAVEIGGIWPPKGIEVLDPWEIPFLNTLILLSSGAAVTWAHHAILAGKEKRAVYALVATVLLALVFTGFQGMEYYQAPFTISDSIYGSTFFLATGFHGFHVIIGTLFLIICGIRQYLGHLTKEHHVGFEAAAWYWHFVDVVWLFLFVSIYWWGGI.

The next 6 helical transmembrane spans lie at 41-61 (GGARLLSLGLIFILYTMFVWW), 85-105 (GFILFIVSEVMFFFAFFWAFF), 137-157 (TLILLSSGAAVTWAHHAILAG), 162-182 (AVYALVATVLLALVFTGFQGM), 200-220 (FFLATGFHGFHVIIGTLFLII), and 245-265 (WHFVDVVWLFLFVSIYWWGGI).

The protein belongs to the cytochrome c oxidase subunit 3 family. Component of the cytochrome c oxidase (complex IV, CIV), a multisubunit enzyme composed of a catalytic core of 3 subunits and several supernumerary subunits. The complex exists as a monomer or a dimer and forms supercomplexes (SCs) in the inner mitochondrial membrane with ubiquinol-cytochrome c oxidoreductase (cytochrome b-c1 complex, complex III, CIII).

It localises to the mitochondrion inner membrane. The catalysed reaction is 4 Fe(II)-[cytochrome c] + O2 + 8 H(+)(in) = 4 Fe(III)-[cytochrome c] + 2 H2O + 4 H(+)(out). In terms of biological role, component of the cytochrome c oxidase, the last enzyme in the mitochondrial electron transport chain which drives oxidative phosphorylation. The respiratory chain contains 3 multisubunit complexes succinate dehydrogenase (complex II, CII), ubiquinol-cytochrome c oxidoreductase (cytochrome b-c1 complex, complex III, CIII) and cytochrome c oxidase (complex IV, CIV), that cooperate to transfer electrons derived from NADH and succinate to molecular oxygen, creating an electrochemical gradient over the inner membrane that drives transmembrane transport and the ATP synthase. Cytochrome c oxidase is the component of the respiratory chain that catalyzes the reduction of oxygen to water. Electrons originating from reduced cytochrome c in the intermembrane space (IMS) are transferred via the dinuclear copper A center (CU(A)) of subunit 2 and heme A of subunit 1 to the active site in subunit 1, a binuclear center (BNC) formed by heme A3 and copper B (CU(B)). The BNC reduces molecular oxygen to 2 water molecules using 4 electrons from cytochrome c in the IMS and 4 protons from the mitochondrial matrix. This chain is Cytochrome c oxidase subunit 3 (COX3), found in Arabidopsis thaliana (Mouse-ear cress).